The chain runs to 503 residues: Annexin A11 (503 aa).

Composition is skewed to pro residues over residues 80–117 and 123–167; these read GYPP…PGMP and PGAP…PVPS. The disordered stretch occupies residues 80–172; it reads GYPPVPPGGF…QPVPSYPGYS (93 aa). 4 Annexin repeats span residues 198-269, 270-341, 353-425, and 429-500; these read FDPL…ALMK, TPVL…SLSQ, SLVQ…AVVK, and NTPA…KICG. An N6-acetyllysine mark is found at lysine 246 and lysine 253. Lysine 477 is subject to N6-acetyllysine.

This sequence belongs to the annexin family. In terms of assembly, interacts with S100A6. Interacts with PDCD6 in a calcium-dependent manner. Interacts with KIF23 during cytokinesis.

Its subcellular location is the cytoplasm. The protein resides in the melanosome. It localises to the nucleus envelope. It is found in the nucleus. The protein localises to the nucleoplasm. Its subcellular location is the cytoskeleton. The protein resides in the spindle. In terms of biological role, required for midbody formation and completion of the terminal phase of cytokinesis. Binds specifically to calcyclin in a calcium-dependent manner. This Mus musculus (Mouse) protein is Annexin A11 (Anxa11).